We begin with the raw amino-acid sequence, 273 residues long: Vitamin B12-binding protein (273 aa).

The N-terminal stretch at 1-18 (MMKTLSSLLLLFSVSLQA) is a signal peptide. The 251-residue stretch at 23-273 (RVISLAPHAT…EHFASIEQKR (251 aa)) folds into the Fe/B12 periplasmic-binding domain. An intrachain disulfide couples cysteine 183 to cysteine 263.

It belongs to the BtuF family. The complex is composed of two ATP-binding proteins (BtuD), two transmembrane proteins (BtuC) and a solute-binding protein (BtuF).

The protein localises to the periplasm. Part of the ABC transporter complex BtuCDF involved in vitamin B12 import. Binds vitamin B12 and delivers it to the periplasmic surface of BtuC. This Vibrio vulnificus (strain YJ016) protein is Vitamin B12-binding protein.